A 183-amino-acid polypeptide reads, in one-letter code: uncharacterized protein (183 aa).

This sequence to M.leprae ML2442.

This is an uncharacterized protein from Mycobacterium tuberculosis (strain CDC 1551 / Oshkosh).